Reading from the N-terminus, the 314-residue chain is MITRMKNWPCLLKRFSIQQFHQFTHLSGRLERAPQSGKSSRDPYLVTVVQGRSKKPRFPGERSNQRFGEDSWFVSSTPLAEVMGVADGVGGWRDLGVDAGRFAKELMSCCSGQTQLSDFDGRSPRNLLIAGFQELSHREQPVVGSSTACLATMHRKDCTLYTANLGDSGFLVVRNGRVLHRSVEQTHDFNTPYQLTVPPEDRKESYYCDKPEMAVSTRHSLLPGDLVLLATDGLFDNMPESTLLSILNGLKERGERDLLEGASRVVEKARELSLNASFQSPFAIKARQHNVSYSGGGKPDDITLILSSVEVPSV.

The PPM-type phosphatase domain occupies 43 to 309 (PYLVTVVQGR…DDITLILSSV (267 aa)). Residues Asp-87, Gly-88, and Asp-232 each coordinate Mn(2+).

This sequence belongs to the PP2C family. Mg(2+) serves as cofactor. The cofactor is Mn(2+).

The catalysed reaction is O-phospho-L-seryl-[protein] + H2O = L-seryl-[protein] + phosphate. It catalyses the reaction O-phospho-L-threonyl-[protein] + H2O = L-threonyl-[protein] + phosphate. This Drosophila simulans (Fruit fly) protein is Protein phosphatase PTC7 homolog fig.